The chain runs to 372 residues: Gibberellin 20 oxidase 1 (372 aa).

In terms of domain architecture, Fe2OG dioxygenase spans 209–309 (RNDSIMRLNY…RRSLAFFLCP (101 aa)). Residues histidine 234, aspartate 236, and histidine 290 each contribute to the Fe cation site. Residue arginine 300 is part of the active site.

The protein belongs to the iron/ascorbate-dependent oxidoreductase family. GA20OX subfamily. Requires Fe(2+) as cofactor. L-ascorbate is required as a cofactor. Preferentially expressed in reproductive organs. Expressed in the epithelium of embryos and the tapetum of anthers. Expressed at low levels in the shoot apical meristem.

It catalyses the reaction gibberellin A12 + 2 2-oxoglutarate + 3 O2 + H(+) = gibberellin A9 + 2 succinate + 3 CO2 + 2 H2O. The enzyme catalyses gibberellin A53 + 2 2-oxoglutarate + 3 O2 + H(+) = gibberellin A20 + 2 succinate + 3 CO2 + 2 H2O. In terms of biological role, key oxidase enzyme in the biosynthesis of gibberellin. Catalyzes the conversion of GA12 and GA53 to GA9 and GA20 respectively, via a three-step oxidation at C-20 of the GA skeleton. The protein is Gibberellin 20 oxidase 1 of Oryza sativa subsp. japonica (Rice).